The following is a 278-amino-acid chain: Energy-coupling factor transporter ATP-binding protein EcfA (278 aa).

One can recognise an ABC transporter domain in the interval 4–239; it reads LETRDLKYSY…SETVRSANLR (236 aa). Residue 37 to 44 coordinates ATP; the sequence is GPNGAGKS.

This sequence belongs to the ABC transporter superfamily. Energy-coupling factor EcfA family. In terms of assembly, forms a stable energy-coupling factor (ECF) transporter complex composed of 2 membrane-embedded substrate-binding proteins (S component), 2 ATP-binding proteins (A component) and 2 transmembrane proteins (T component).

Its subcellular location is the cell membrane. Its function is as follows. ATP-binding (A) component of a common energy-coupling factor (ECF) ABC-transporter complex. Unlike classic ABC transporters this ECF transporter provides the energy necessary to transport a number of different substrates. The polypeptide is Energy-coupling factor transporter ATP-binding protein EcfA (Methanococcus maripaludis (strain DSM 14266 / JCM 13030 / NBRC 101832 / S2 / LL)).